We begin with the raw amino-acid sequence, 374 residues long: Transcription termination factor 1, mitochondrial (374 aa).

The N-terminal 37 residues, 1–37 (MASRNIWRVRRNFLFDLRGWVPQYSAEVFLKSIPFRP), are a transit peptide targeting the mitochondrion. 5 interaction with DNA regions span residues 146-147 (RS), 224-228 (QSTKR), 301-308 (SEKKFNDK), 332-335 (SIHT), and 361-368 (SQRRYEAK).

This sequence belongs to the mTERF family. In terms of assembly, monomer. Post-translationally, is a phosphoprotein. While the DNA-binding activity is unaffected by the phosphorylation/dephosphorylation state, only the phosphorylated form of the protein is active for termination activity. Functioning seems to be regulated by phosphorylation.

The protein resides in the mitochondrion. Functionally, transcription termination factor. Binds to a 28 bp region within the tRNA(Leu(uur)) gene at a position immediately adjacent to and downstream of the 16S rRNA gene; this region comprises a tridecamer sequence critical for directing accurate termination. Binds DNA along the major grove and promotes DNA bending and partial unwinding. Promotes base flipping. Transcription termination activity appears to be polarized with highest specificity for transcripts initiated on the light strand. This Rattus norvegicus (Rat) protein is Transcription termination factor 1, mitochondrial (Mterf1).